A 101-amino-acid polypeptide reads, in one-letter code: MAGQKIRIRLKAYDHEAIDASARKIVETVTRTGARVVGPVPLPTEKNVYCVIRSPHKYKDSREHFEMRTHKRLIDILDPTPKTVDALMRIDLPASVDVNIQ.

Belongs to the universal ribosomal protein uS10 family. In terms of assembly, part of the 30S ribosomal subunit.

Involved in the binding of tRNA to the ribosomes. The chain is Small ribosomal subunit protein uS10 from Rhodococcus erythropolis (strain PR4 / NBRC 100887).